Here is a 199-residue protein sequence, read N- to C-terminus: Recombination protein RecR (199 aa).

The C4-type zinc-finger motif lies at 57–72 (CSICGNITEDDPCVIC). Residues 80 to 176 (STVLVVEEAK…KVTRLAHGLS (97 aa)) form the Toprim domain.

The protein belongs to the RecR family.

May play a role in DNA repair. It seems to be involved in an RecBC-independent recombinational process of DNA repair. It may act with RecF and RecO. In Lactiplantibacillus plantarum (strain ATCC BAA-793 / NCIMB 8826 / WCFS1) (Lactobacillus plantarum), this protein is Recombination protein RecR.